A 726-amino-acid polypeptide reads, in one-letter code: Catalase-peroxidase (726 aa).

Residues 1-33 (MSTTDDTHNTLSTGKCPFHQGGHDRSAGAGTAS) form a disordered region. A cross-link (tryptophyl-tyrosyl-methioninium (Trp-Tyr) (with M-252)) is located at residues 105–226 (WHGAGTYRSI…LGATEMGLIY (122 aa)). Histidine 106 (proton acceptor) is an active-site residue. Residues 226-252 (YVNPEGPDHSGEPLSAAAAIRATFGNM) constitute a cross-link (tryptophyl-tyrosyl-methioninium (Tyr-Met) (with W-105)). Residue histidine 267 coordinates heme b.

This sequence belongs to the peroxidase family. Peroxidase/catalase subfamily. In terms of assembly, homodimer or homotetramer. It depends on heme b as a cofactor. In terms of processing, formation of the three residue Trp-Tyr-Met cross-link is important for the catalase, but not the peroxidase activity of the enzyme.

The enzyme catalyses H2O2 + AH2 = A + 2 H2O. The catalysed reaction is 2 H2O2 = O2 + 2 H2O. Bifunctional enzyme with both catalase and broad-spectrum peroxidase activity. The chain is Catalase-peroxidase from Salmonella paratyphi B (strain ATCC BAA-1250 / SPB7).